The chain runs to 172 residues: Ubiquitin-conjugating enzyme E2 2 (172 aa).

One can recognise a UBC core domain in the interval Pro-4–Glu-150. Cys-88 acts as the Glycyl thioester intermediate in catalysis. Position 120 is a phosphoserine; by SGV1 (Ser-120). A disordered region spans residues Val-145–Asp-172. Acidic residues predominate over residues Asp-151–Asp-172.

The protein belongs to the ubiquitin-conjugating enzyme family. Forms a heterodimer complexes with the E3 enzymes BRE1, RAD18 and UBR1. Also interacts with UBR2, RTF1, PAF1 and the RNA polymerase II hyperphosphorylated form. The interaction with RNA polymerase II is BRE1- and PAF1-dependent. The N-terminus is blocked.

The protein localises to the cytoplasm. Its subcellular location is the nucleus. The catalysed reaction is S-ubiquitinyl-[E1 ubiquitin-activating enzyme]-L-cysteine + [E2 ubiquitin-conjugating enzyme]-L-cysteine = [E1 ubiquitin-activating enzyme]-L-cysteine + S-ubiquitinyl-[E2 ubiquitin-conjugating enzyme]-L-cysteine.. Its pathway is protein modification; protein ubiquitination. E2 ubiquitin-conjugating enzyme that accepts ubiquitin from the ubiquitin-activating enzyme E1 and transfers it to a E3 ubiquitin-protein ligase. In association with the E3 enzyme BRE1 and LGE1, it plays a role in transcription regulation by catalyzing the monoubiquitination of histone H2B to form H2BK123ub1. H2BK123ub1 gives a specific tag for epigenetic transcriptional activation, elongation by RNA polymerase II, telomeric silencing, and is also a prerequisite for H3K4me and H3K79me formation. In association with the E3 enzyme RAD18, it catalyzes the monoubiquitination of POL30 'Lys-164', involved in postreplication repair of UV-damaged DNA. The RAD6/UBC2-RAD18 complex is also involved in prevention of spontaneous mutations caused by 7,8-dihydro-8-oxoguanine. In association with the E3 enzyme UBR1, is involved in N-end rule-dependent protein degradation. Also involved in sporulation. This Saccharomyces cerevisiae (strain ATCC 204508 / S288c) (Baker's yeast) protein is Ubiquitin-conjugating enzyme E2 2 (RAD6).